Here is a 341-residue protein sequence, read N- to C-terminus: 3-keto-steroid reductase/17-beta-hydroxysteroid dehydrogenase 7 (341 aa).

Topologically, residues 1–229 are extracellular; it reads MRKVVLITGA…VACPGTALTN (229 aa). 8 to 15 is an NAD(+) binding site; that stretch reads TGASSGIG. N-linked (GlcNAc...) asparagine glycosylation is present at N37. Position 171 (S171) interacts with substrate. Residue N178 is glycosylated (N-linked (GlcNAc...) asparagine). The active-site Proton acceptor is Y193. The N-linked (GlcNAc...) asparagine glycan is linked to N229. Residues 230-250 traverse the membrane as a helical segment; the sequence is LTYGILPPFIWTLLMPAILLL. The Cytoplasmic portion of the chain corresponds to 251–341; the sequence is RFFANAFTLT…NQARLSGSCL (91 aa).

This sequence belongs to the short-chain dehydrogenases/reductases (SDR) family. ERG27 subfamily. Binds to the short form of prolactin receptor. In terms of processing, phosphorylated. In terms of tissue distribution, highly expressed in adrenal gland, liver, lung and thymus. Expressed in breast, ovaries, pituitary gland, pregnant uterus, prostate, kidney, lymph node, small intestine, spinal cord and trachea. Weakly expressed in all other tissues tested. As to expression, expressed in eye ciliary epithelial cells and neuroendocrine cells.

The protein localises to the endoplasmic reticulum membrane. The catalysed reaction is 17beta-estradiol + NADP(+) = estrone + NADPH + H(+). The enzyme catalyses a 3beta-hydroxysteroid + NADP(+) = a 3-oxosteroid + NADPH + H(+). It carries out the reaction 3-dehydro-4alpha-methylzymosterol + NADPH + H(+) = 4alpha-methylzymosterol + NADP(+). It catalyses the reaction zymosterone + NADPH + H(+) = zymosterol + NADP(+). The catalysed reaction is 4alpha-methyl-5alpha-cholest-8-en-3-one + NADPH + H(+) = 4alpha-methyl-5alpha-cholest-8-en-3beta-ol + NADP(+). The enzyme catalyses 4alpha-methyl-5alpha-cholest-7-en-3beta-ol + NADP(+) = 4alpha-methyl-5alpha-cholest-7-en-3-one + NADPH + H(+). It carries out the reaction 5alpha-cholest-8-en-3-one + NADPH + H(+) = 5alpha-cholest-8-en-3beta-ol + NADP(+). It catalyses the reaction 5alpha-androstane-3beta,17beta-diol + NADP(+) = 17beta-hydroxy-5alpha-androstan-3-one + NADPH + H(+). The catalysed reaction is progesterone + NADPH + H(+) = 3beta-hydroxypregn-4-ene-20-one + NADP(+). It participates in steroid biosynthesis; estrogen biosynthesis. The protein operates within steroid biosynthesis; zymosterol biosynthesis; zymosterol from lanosterol: step 5/6. Its activity is regulated as follows. Estradiol 17-beta-dehydrogenase and dihydrotestosterone oxidoreductase activities are selectively inhibited by 4-methyl-4-aza-5alpha-androstane derivatives, such as 17beta-[(N-Heptyl)methylamino]-4-aza-5r-androstan-3-one and 17beta-(N-Decylformamido)-4-aza-5r-androstan-3-one. Bifunctional enzyme involved in steroid-hormone metabolism and cholesterol biosynthesis. Catalyzes the NADP(H)-dependent reduction of estrogens and androgens and regulates the biological potency of these steroids. Converts estrone (E1) to a more potent estrogen, 17beta-estradiol (E2). Converts dihydrotestosterone (DHT) to its inactive form 5a-androstane-3b,17b-diol. Converts moderately progesterone to 3beta-hydroxypregn-4-ene-20-one, leading to its inactivation. Additionally, participates in the post-squalene cholesterol biosynthesis, as a 3-ketosteroid reductase. In terms of biological role, does not have enzymatic activities toward E1 and DHT. This is 3-keto-steroid reductase/17-beta-hydroxysteroid dehydrogenase 7 (HSD17B7) from Homo sapiens (Human).